The primary structure comprises 156 residues: Small ribosomal subunit protein uS7c (156 aa).

It belongs to the universal ribosomal protein uS7 family. As to quaternary structure, part of the 30S ribosomal subunit.

It is found in the plastid. It localises to the chloroplast. In terms of biological role, one of the primary rRNA binding proteins, it binds directly to 16S rRNA where it nucleates assembly of the head domain of the 30S subunit. The protein is Small ribosomal subunit protein uS7c (rps7) of Porphyra purpurea (Red seaweed).